The sequence spans 673 residues: MSLHAVSESNIKQIPDMDYYFISGGLPSNYGGLTKSLLLRSKLFGEECNQNTFFLTFRFDLELSSKIDELYSNGKIDKKFTSVINLFDDFLSVRTNGKRSYEERIGLDQIKKQVGMGKFAKTLLRLFGKKNNEMSVVYYGDGETIRYVDYWNDKNQLIKREEYTKNGNLVLVTHYDVQLNKMYLQEYINDQNQVYLDKLYVWNNEEKDVQLSHIIWYSLEGEIKVKDESELRQYWIEYLQKQNDKPKLFLVDSRPQDKHVFKVKKSPSSYYGAIIHNKHYGSNKYQIKGRYKEVFSQMYNLDAVFFITEEQLEDFKLISGEQETFFFTPHTIDKPLDPAVLNVPSEKYKAVIISRLASMKNLIHAVKAFSLVVKEIPEAKLDIFGSGEDFEKIKKEIEDTKLQNNVFLKGYTDNPDSEFQKAWLTISTSHFEGFGLSNMEALSNGCPVVTYDYDYGARSLVTDGANGYVIEQYNIEKLGQAIISLMKDESTHQKFSEQAFKMAEKYSRPNYIENWAFALNQMIEVRIEREKFSKKVGKKDPSISSYTEDFDKTKIEIDIENFDHNDIKKIRLVGLDRKNKAEIISTNLQNDQLFVIDLEKDVNIEKIAANKTQVIDFYIVFNANGHIKTMRRLSSEETKLSGNSIDTNNGYRVEPYTTVKGNFSWRVTEIKES.

Serine 2 is subject to Phosphoserine.

This sequence belongs to the glycosyltransferase group 1 family. Glycosyltransferase 4 subfamily.

It localises to the cytoplasm. It catalyses the reaction 4-O-{[(2R)-1-glycerylphospho](n)-(2R)-1-glycerylphospho}-N-acetyl-beta-D-mannosaminyl-(1-&gt;4)-N-acetyl-alpha-D-glucosaminyl undecaprenyl diphosphate + n UDP-alpha-D-glucose = 4-O-{[(2R)-2-alpha-D-glucosyl-1-glycerylphospho](n)-(2R)-1-glycerylphospho}-N-acetyl-beta-D-mannosaminyl-(1-&gt;4)-N-acetyl-alpha-D-glucosaminyl undecaprenyl diphosphate + n UDP + n H(+). It participates in cell wall biogenesis; poly(glycerol phosphate) teichoic acid biosynthesis. Its function is as follows. Catalyzes the addition of glucose to the C-2 hydroxy group of the glycerol units in teichoic acid. The sequence is that of Poly(glycerol-phosphate) alpha-glucosyltransferase (tagE) from Bacillus subtilis (strain 168).